A 211-amino-acid polypeptide reads, in one-letter code: Uracil phosphoribosyltransferase (211 aa).

5-phospho-alpha-D-ribose 1-diphosphate is bound by residues R77, R102, and 129-137; that span reads DPMLATGGS. Uracil contacts are provided by residues I192 and 197–199; that span reads GDA. D198 serves as a coordination point for 5-phospho-alpha-D-ribose 1-diphosphate.

The protein belongs to the UPRTase family. The cofactor is Mg(2+).

It carries out the reaction UMP + diphosphate = 5-phospho-alpha-D-ribose 1-diphosphate + uracil. The protein operates within pyrimidine metabolism; UMP biosynthesis via salvage pathway; UMP from uracil: step 1/1. With respect to regulation, allosterically activated by GTP. Its function is as follows. Catalyzes the conversion of uracil and 5-phospho-alpha-D-ribose 1-diphosphate (PRPP) to UMP and diphosphate. The chain is Uracil phosphoribosyltransferase from Corynebacterium diphtheriae (strain ATCC 700971 / NCTC 13129 / Biotype gravis).